Consider the following 209-residue polypeptide: Ribonuclease HII (209 aa).

Positions 7-198 (GPVAGVDEAG…VAKAHQEWLH (192 aa)) constitute an RNase H type-2 domain. A divalent metal cation-binding residues include Asp-13, Glu-14, and Asp-107.

It belongs to the RNase HII family. Mn(2+) serves as cofactor. The cofactor is Mg(2+).

It is found in the cytoplasm. It carries out the reaction Endonucleolytic cleavage to 5'-phosphomonoester.. Endonuclease that specifically degrades the RNA of RNA-DNA hybrids. The chain is Ribonuclease HII from Corynebacterium glutamicum (strain R).